The primary structure comprises 422 residues: ATP-dependent Clp protease ATP-binding subunit ClpX 1 (422 aa).

In terms of domain architecture, ClpX-type ZB spans 4 to 57; it reads DRKNRESGKLLYCSFCGKSQHEVRKLIAGPAVFVCDECVELCNDIIREDLQGSE. Zn(2+)-binding residues include C16, C19, C38, and C41. 120 to 127 contributes to the ATP binding site; the sequence is PTGSGKTL.

This sequence belongs to the ClpX chaperone family. Component of the ClpX-ClpP complex. Forms a hexameric ring that, in the presence of ATP, binds to fourteen ClpP subunits assembled into a disk-like structure with a central cavity, resembling the structure of eukaryotic proteasomes.

Its function is as follows. ATP-dependent specificity component of the Clp protease. It directs the protease to specific substrates. Can perform chaperone functions in the absence of ClpP. The protein is ATP-dependent Clp protease ATP-binding subunit ClpX 1 of Methylococcus capsulatus (strain ATCC 33009 / NCIMB 11132 / Bath).